We begin with the raw amino-acid sequence, 132 residues long: Interleukin-5 (132 aa).

The first 19 residues, 1–19 (MRMLLHLSILTLACVWTFA), serve as a signal peptide directing secretion. 3 N-linked (GlcNAc...) asparagine glycosylation sites follow: Asn45, Asn74, and Asn88.

This sequence belongs to the IL-5 family. Homodimer; disulfide-linked. Interacts with IL5RA. Interacts with CSF2RB.

It is found in the secreted. In terms of biological role, homodimeric cytokine expressed predominantly by T-lymphocytes and NK cells that plays an important role in the survival, differentiation, and chemotaxis of eosinophils. Also acts on activated and resting B-cells to induce immunoglobulin production, growth, and differentiation. Mechanistically, exerts its biological effects through a receptor composed of IL5RA subunit and the cytokine receptor common subunit beta/CSF2RB. Binding to the receptor leads to activation of various kinases including LYN, SYK and JAK2 and thereby propagates signals through the RAS-MAPK and JAK-STAT5 pathways respectively. The sequence is that of Interleukin-5 (IL5) from Sigmodon hispidus (Hispid cotton rat).